The sequence spans 130 residues: Small ribosomal subunit protein uS9 (130 aa).

It belongs to the universal ribosomal protein uS9 family.

The sequence is that of Small ribosomal subunit protein uS9 from Paracidovorax citrulli (strain AAC00-1) (Acidovorax citrulli).